Reading from the N-terminus, the 75-residue chain is Small ribosomal subunit protein bS18 (75 aa).

This sequence belongs to the bacterial ribosomal protein bS18 family. In terms of assembly, part of the 30S ribosomal subunit. Forms a tight heterodimer with protein bS6.

Binds as a heterodimer with protein bS6 to the central domain of the 16S rRNA, where it helps stabilize the platform of the 30S subunit. The protein is Small ribosomal subunit protein bS18 of Glaesserella parasuis serovar 5 (strain SH0165) (Haemophilus parasuis).